We begin with the raw amino-acid sequence, 177 residues long: GTP-dependent dephospho-CoA kinase (177 aa).

GTP contacts are provided by aspartate 48, valine 49, valine 50, aspartate 67, lysine 69, glutamate 124, and aspartate 147.

It belongs to the GTP-dependent DPCK family.

It carries out the reaction 3'-dephospho-CoA + GTP = GDP + CoA + H(+). It participates in cofactor biosynthesis; coenzyme A biosynthesis. Functionally, catalyzes the GTP-dependent phosphorylation of the 3'-hydroxyl group of dephosphocoenzyme A to form coenzyme A (CoA). The sequence is that of GTP-dependent dephospho-CoA kinase from Thermococcus onnurineus (strain NA1).